We begin with the raw amino-acid sequence, 154 residues long: PHA granule-associated protein PhaP (154 aa).

The protein localises to the cytoplasmic granule. Its function is as follows. Polyhydroxyalkanoate (PHA) granule structural protein. Important for PHA granule formation and separation, and for cell growth. The sequence is that of PHA granule-associated protein PhaP (phaP) from Haloferax mediterranei (strain ATCC 33500 / DSM 1411 / JCM 8866 / NBRC 14739 / NCIMB 2177 / R-4) (Halobacterium mediterranei).